The sequence spans 338 residues: Biotin synthase (338 aa).

In terms of domain architecture, Radical SAM core spans 50 to 277; it reads QAVQLSTLMS…KSYVRLSAGR (228 aa). [4Fe-4S] cluster contacts are provided by C65, C69, and C72. C109, C140, C200, and R272 together coordinate [2Fe-2S] cluster.

Belongs to the radical SAM superfamily. Biotin synthase family. As to quaternary structure, homodimer. It depends on [4Fe-4S] cluster as a cofactor. Requires [2Fe-2S] cluster as cofactor.

The enzyme catalyses (4R,5S)-dethiobiotin + (sulfur carrier)-SH + 2 reduced [2Fe-2S]-[ferredoxin] + 2 S-adenosyl-L-methionine = (sulfur carrier)-H + biotin + 2 5'-deoxyadenosine + 2 L-methionine + 2 oxidized [2Fe-2S]-[ferredoxin]. It participates in cofactor biosynthesis; biotin biosynthesis; biotin from 7,8-diaminononanoate: step 2/2. In terms of biological role, catalyzes the conversion of dethiobiotin (DTB) to biotin by the insertion of a sulfur atom into dethiobiotin via a radical-based mechanism. This Actinobacillus succinogenes (strain ATCC 55618 / DSM 22257 / CCUG 43843 / 130Z) protein is Biotin synthase.